The following is a 280-amino-acid chain: Eukaryotic translation initiation factor 3 subunit F-1 (280 aa).

The 131-residue stretch at 8 to 138 (VRVHPVVLFQ…LRAYVCIQLG (131 aa)) folds into the MPN domain.

Belongs to the eIF-3 subunit F family. Component of the eukaryotic translation initiation factor 3 (eIF-3) complex. The eIF-3 complex interacts with pix.

It localises to the cytoplasm. Its function is as follows. Component of the eukaryotic translation initiation factor 3 (eIF-3) complex, which is involved in protein synthesis of a specialized repertoire of mRNAs and, together with other initiation factors, stimulates binding of mRNA and methionyl-tRNAi to the 40S ribosome. The eIF-3 complex specifically targets and initiates translation of a subset of mRNAs involved in cell proliferation. This chain is Eukaryotic translation initiation factor 3 subunit F-1, found in Drosophila ananassae (Fruit fly).